Reading from the N-terminus, the 50-residue chain is MKLVFLFFIVAVMVSLFVGMTEADKPRFLTTVCQDTYEKCKEQMLKKDKK.

A signal peptide spans 1 to 23; that stretch reads MKLVFLFFIVAVMVSLFVGMTEA. Residues Cys33 and Cys40 are joined by a disulfide bond.

This sequence belongs to the caterpillar 9 family. Expressed by the venom apparatus.

It localises to the secreted. Its function is as follows. Probable toxin. The polypeptide is U-megalopygitoxin(9)-Mo13 (Megalopyge opercularis (Southern flannel moth)).